A 184-amino-acid chain; its full sequence is Large ribosomal subunit protein uL5 (184 aa).

The protein belongs to the universal ribosomal protein uL5 family. As to quaternary structure, part of the 50S ribosomal subunit; part of the 5S rRNA/L5/L18/L25 subcomplex. Contacts the 5S rRNA and the P site tRNA. Forms a bridge to the 30S subunit in the 70S ribosome.

Its function is as follows. This is one of the proteins that bind and probably mediate the attachment of the 5S RNA into the large ribosomal subunit, where it forms part of the central protuberance. In the 70S ribosome it contacts protein S13 of the 30S subunit (bridge B1b), connecting the 2 subunits; this bridge is implicated in subunit movement. Contacts the P site tRNA; the 5S rRNA and some of its associated proteins might help stabilize positioning of ribosome-bound tRNAs. In Agrobacterium fabrum (strain C58 / ATCC 33970) (Agrobacterium tumefaciens (strain C58)), this protein is Large ribosomal subunit protein uL5.